The primary structure comprises 901 residues: Protein translocase subunit SecA (901 aa).

ATP is bound by residues glutamine 87, 105-109 (GEGKT), and aspartate 512. The interval 839–901 (QMEEQRRQES…KYKQCHGRLA (63 aa)) is disordered. Residues 841-850 (EEQRRQESER) show a composition bias toward basic and acidic residues. 4 residues coordinate Zn(2+): cysteine 885, cysteine 887, cysteine 896, and histidine 897. Over residues 891 to 901 (KKYKQCHGRLA) the composition is skewed to basic residues.

This sequence belongs to the SecA family. In terms of assembly, monomer and homodimer. Part of the essential Sec protein translocation apparatus which comprises SecA, SecYEG and auxiliary proteins SecDF-YajC and YidC. The cofactor is Zn(2+).

It is found in the cell inner membrane. Its subcellular location is the cytoplasm. The enzyme catalyses ATP + H2O + cellular proteinSide 1 = ADP + phosphate + cellular proteinSide 2.. Its function is as follows. Part of the Sec protein translocase complex. Interacts with the SecYEG preprotein conducting channel. Has a central role in coupling the hydrolysis of ATP to the transfer of proteins into and across the cell membrane, serving both as a receptor for the preprotein-SecB complex and as an ATP-driven molecular motor driving the stepwise translocation of polypeptide chains across the membrane. The chain is Protein translocase subunit SecA from Erwinia tasmaniensis (strain DSM 17950 / CFBP 7177 / CIP 109463 / NCPPB 4357 / Et1/99).